The following is a 515-amino-acid chain: Putative ammonium transporter 2 (515 aa).

12 helical membrane passes run 34 to 54 (GVWMMASSFIIFTMTAGFGLL), 72 to 92 (VFDVIFGGLAYWMFGYGLTFG), 124 to 144 (GISYSLFIFQMSFATTTSTIV), 156 to 176 (SHCFISFFITLVHSVAGHWVW), 191 to 211 (AGCSAVHLVGGVSGLVATLYL), 226 to 246 (VSDPTKAILGFLMIWWGWLAF), 266 to 286 (AVGTILASAGGGVVTVIITRL), 291 to 311 (IQMDMLIDGMLASLVASTGGC), 321 to 337 (LVGAIGSSLALAAYPVT), 346 to 366 (VGVFPVHVVGSIWGMIAPAIF), 381 to 401 (FQTSDEINGLLYGGGFYLLFL), and 404 to 424 (FVILVIGTYSAICAFIILFLI).

This sequence belongs to the ammonia transporter channel (TC 1.A.11.2) family.

The protein resides in the membrane. In terms of biological role, involved in the uptake of ammonia. Implicated in aging. This is Putative ammonium transporter 2 (amt-2) from Caenorhabditis elegans.